The sequence spans 340 residues: Holliday junction branch migration complex subunit RuvB (340 aa).

A large ATPase domain (RuvB-L) region spans residues M1–Y181. ATP contacts are provided by residues L20, R21, G62, K65, T66, T67, E128–F130, R171, Y181, and R218. A Mg(2+)-binding site is contributed by T66. The interval T182 to G252 is small ATPAse domain (RuvB-S). The segment at D255–Q340 is head domain (RuvB-H). The DNA site is built by R309 and R314.

It belongs to the RuvB family. Homohexamer. Forms an RuvA(8)-RuvB(12)-Holliday junction (HJ) complex. HJ DNA is sandwiched between 2 RuvA tetramers; dsDNA enters through RuvA and exits via RuvB. An RuvB hexamer assembles on each DNA strand where it exits the tetramer. Each RuvB hexamer is contacted by two RuvA subunits (via domain III) on 2 adjacent RuvB subunits; this complex drives branch migration. In the full resolvosome a probable DNA-RuvA(4)-RuvB(12)-RuvC(2) complex forms which resolves the HJ.

It localises to the cytoplasm. The catalysed reaction is ATP + H2O = ADP + phosphate + H(+). Its function is as follows. The RuvA-RuvB-RuvC complex processes Holliday junction (HJ) DNA during genetic recombination and DNA repair, while the RuvA-RuvB complex plays an important role in the rescue of blocked DNA replication forks via replication fork reversal (RFR). RuvA specifically binds to HJ cruciform DNA, conferring on it an open structure. The RuvB hexamer acts as an ATP-dependent pump, pulling dsDNA into and through the RuvAB complex. RuvB forms 2 homohexamers on either side of HJ DNA bound by 1 or 2 RuvA tetramers; 4 subunits per hexamer contact DNA at a time. Coordinated motions by a converter formed by DNA-disengaged RuvB subunits stimulates ATP hydrolysis and nucleotide exchange. Immobilization of the converter enables RuvB to convert the ATP-contained energy into a lever motion, pulling 2 nucleotides of DNA out of the RuvA tetramer per ATP hydrolyzed, thus driving DNA branch migration. The RuvB motors rotate together with the DNA substrate, which together with the progressing nucleotide cycle form the mechanistic basis for DNA recombination by continuous HJ branch migration. Branch migration allows RuvC to scan DNA until it finds its consensus sequence, where it cleaves and resolves cruciform DNA. In Campylobacter hominis (strain ATCC BAA-381 / DSM 21671 / CCUG 45161 / LMG 19568 / NCTC 13146 / CH001A), this protein is Holliday junction branch migration complex subunit RuvB.